A 262-amino-acid polypeptide reads, in one-letter code: MKIALGIEYDGSRYFGWQRQDEVESVQQKLEEALSIVANAPIEVFCAGRTDSGVHGTGQVVHFETQAIRPLQSWCFGTNANLPDDIAVKWAVEVSEDFHARFSATARRYRYIIFNNKLRSAILPKGVSHYHYELDHQKMHEAGQFLLGENDFSSFRAAKCQSHTPWRNVHYLNVSRLGNYIVVDIQANAFVHHMVRNIVGSLIEVGQGRQPVEWIQWLLAQRDRTLAAPTAKAEGLYLVDVHYPERFGIPKTALGPLFLADS.

Residue aspartate 51 is the Nucleophile of the active site. Tyrosine 109 serves as a coordination point for substrate.

Belongs to the tRNA pseudouridine synthase TruA family. In terms of assembly, homodimer.

The enzyme catalyses uridine(38/39/40) in tRNA = pseudouridine(38/39/40) in tRNA. Its function is as follows. Formation of pseudouridine at positions 38, 39 and 40 in the anticodon stem and loop of transfer RNAs. This is tRNA pseudouridine synthase A from Actinobacillus pleuropneumoniae serotype 3 (strain JL03).